An 80-amino-acid chain; its full sequence is Acyl carrier protein (80 aa).

Residues 4-79 (DEVKGQVYDI…DAINYIVEKK (76 aa)) form the Carrier domain. Position 39 is an O-(pantetheine 4'-phosphoryl)serine (Ser-39).

The protein belongs to the acyl carrier protein (ACP) family. Post-translationally, 4'-phosphopantetheine is transferred from CoA to a specific serine of apo-ACP by AcpS. This modification is essential for activity because fatty acids are bound in thioester linkage to the sulfhydryl of the prosthetic group.

The protein localises to the cytoplasm. It participates in lipid metabolism; fatty acid biosynthesis. Carrier of the growing fatty acid chain in fatty acid biosynthesis. This Chloroherpeton thalassium (strain ATCC 35110 / GB-78) protein is Acyl carrier protein.